We begin with the raw amino-acid sequence, 470 residues long: Asparagine--tRNA ligase (470 aa).

This sequence belongs to the class-II aminoacyl-tRNA synthetase family. In terms of assembly, homodimer.

Its subcellular location is the cytoplasm. It catalyses the reaction tRNA(Asn) + L-asparagine + ATP = L-asparaginyl-tRNA(Asn) + AMP + diphosphate + H(+). The polypeptide is Asparagine--tRNA ligase (Blochmanniella pennsylvanica (strain BPEN)).